The following is a 471-amino-acid chain: Anthranilate 1,2-dioxygenase large subunit (471 aa).

One can recognise a Rieske domain in the interval 52 to 160 (IYACHESEIP…IASYRGFVFV (109 aa)). [2Fe-2S] cluster contacts are provided by Cys-93, His-95, Cys-113, and His-116. Residues His-220, His-225, and Asp-379 each contribute to the Fe cation site.

The protein belongs to the bacterial ring-hydroxylating dioxygenase alpha subunit family. As to quaternary structure, the anthranilate dioxygenase (AntDO) multicomponent enzyme system is composed of an oxygenase component and a NADH:acceptor reductase component (AntC). The oxygenase component is a heterohexamer of 3 large (AntA) and 3 small (AntB) subunits. Requires Fe cation as cofactor. The cofactor is [2Fe-2S] cluster.

The enzyme catalyses anthranilate + NADH + O2 + 3 H(+) = catechol + NH4(+) + CO2 + NAD(+). The catalysed reaction is anthranilate + NADPH + O2 + 3 H(+) = catechol + NH4(+) + CO2 + NADP(+). Its pathway is aromatic compound metabolism; anthranilate degradation via hydroxylation; catechol from anthranilate: step 1/1. Functionally, component of anthranilate dioxygenase multicomponent enzyme system which catalyzes the incorporation of both atoms of molecular oxygen into anthranilate to form catechol. This is Anthranilate 1,2-dioxygenase large subunit from Acinetobacter baylyi (strain ATCC 33305 / BD413 / ADP1).